Consider the following 263-residue polypeptide: NAD(P)H-quinone oxidoreductase subunit K, chloroplastic (263 aa).

Residues Cys-64, Cys-65, Cys-129, and Cys-160 each coordinate [4Fe-4S] cluster.

Belongs to the complex I 20 kDa subunit family. As to quaternary structure, NDH is composed of at least 16 different subunits, 5 of which are encoded in the nucleus. It depends on [4Fe-4S] cluster as a cofactor.

Its subcellular location is the plastid. It is found in the chloroplast thylakoid membrane. It carries out the reaction a plastoquinone + NADH + (n+1) H(+)(in) = a plastoquinol + NAD(+) + n H(+)(out). The catalysed reaction is a plastoquinone + NADPH + (n+1) H(+)(in) = a plastoquinol + NADP(+) + n H(+)(out). Functionally, NDH shuttles electrons from NAD(P)H:plastoquinone, via FMN and iron-sulfur (Fe-S) centers, to quinones in the photosynthetic chain and possibly in a chloroplast respiratory chain. The immediate electron acceptor for the enzyme in this species is believed to be plastoquinone. Couples the redox reaction to proton translocation, and thus conserves the redox energy in a proton gradient. The polypeptide is NAD(P)H-quinone oxidoreductase subunit K, chloroplastic (ndhK) (Huperzia lucidula (Shining clubmoss)).